The primary structure comprises 295 residues: Lectin 11 (295 aa).

Residues M1–K22 are Cytoplasmic-facing. A helical transmembrane segment spans residues L23 to A45. The Extracellular portion of the chain corresponds to N46 to M295. N152 is a glycosylation site (N-linked (GlcNAc...) asparagine).

The protein belongs to the leguminous lectin family.

The protein resides in the membrane. In terms of biological role, may be involved in arbuscular mycorrhizal (AM) symbiosis with AM fungi. In Medicago truncatula (Barrel medic), this protein is Lectin 11.